The following is a 427-amino-acid chain: Adenylosuccinate synthetase (427 aa).

GTP-binding positions include 12 to 18 and 40 to 42; these read GDEGKGK and GHT. Asp13 serves as the catalytic Proton acceptor. The Mg(2+) site is built by Asp13 and Gly40. IMP is bound by residues 13–16, 38–41, Thr128, Arg142, Gln223, Thr238, and Arg302; these read DEGK and NAGH. Catalysis depends on His41, which acts as the Proton donor. 298-304 contacts substrate; sequence TTTGRPR. GTP contacts are provided by residues Arg304, 330 to 332, and 412 to 414; these read SID and SVG.

Belongs to the adenylosuccinate synthetase family. As to quaternary structure, homodimer. Mg(2+) is required as a cofactor.

It localises to the cytoplasm. It catalyses the reaction IMP + L-aspartate + GTP = N(6)-(1,2-dicarboxyethyl)-AMP + GDP + phosphate + 2 H(+). Its pathway is purine metabolism; AMP biosynthesis via de novo pathway; AMP from IMP: step 1/2. Its function is as follows. Plays an important role in the de novo pathway of purine nucleotide biosynthesis. Catalyzes the first committed step in the biosynthesis of AMP from IMP. The protein is Adenylosuccinate synthetase of Staphylococcus epidermidis (strain ATCC 12228 / FDA PCI 1200).